We begin with the raw amino-acid sequence, 556 residues long: Aplysianin-A (556 aa).

A signal peptide spans 1–19 (MAVRFLALGLLIFVTSCSG). N-linked (GlcNAc...) asparagine glycosylation is found at asparagine 150, asparagine 177, asparagine 374, asparagine 399, asparagine 414, and asparagine 430.

The protein to A.fulica achacin protein. In terms of assembly, homotetramer. In terms of tissue distribution, albumen gland.

Functionally, has antibacterial activity against Gram-negative and Gram-positive bacteria. This Aplysia kurodai (Kuroda's sea hare) protein is Aplysianin-A.